Here is a 415-residue protein sequence, read N- to C-terminus: Diaminopimelate decarboxylase (415 aa).

Residue K60 is modified to N6-(pyridoxal phosphate)lysine. Pyridoxal 5'-phosphate-binding positions include G239 and 274–277 (EPGR). Residues R277, R313, and Y317 each contribute to the substrate site. The active-site Proton donor is the C344. Substrate is bound by residues E345 and Y372. Y372 is a pyridoxal 5'-phosphate binding site.

Belongs to the Orn/Lys/Arg decarboxylase class-II family. LysA subfamily. In terms of assembly, homodimer. It depends on pyridoxal 5'-phosphate as a cofactor.

It carries out the reaction meso-2,6-diaminopimelate + H(+) = L-lysine + CO2. The protein operates within amino-acid biosynthesis; L-lysine biosynthesis via DAP pathway; L-lysine from DL-2,6-diaminopimelate: step 1/1. Its function is as follows. Specifically catalyzes the decarboxylation of meso-diaminopimelate (meso-DAP) to L-lysine. The chain is Diaminopimelate decarboxylase from Haemophilus influenzae (strain ATCC 51907 / DSM 11121 / KW20 / Rd).